Consider the following 306-residue polypeptide: sn-1-specific diacylglycerol lipase ABHD11 (306 aa).

Residues Gly19 to Glu40 are disordered. Low complexity predominate over residues Ala23–Ser33. Position 78 is an N6-succinyllysine (Lys78). Residues Ser132, Asp228, and His287 each act as charge relay system in the active site.

It belongs to the AB hydrolase superfamily. In terms of assembly, interacts with OGDH and DLST; this interaction maintains the functional lipoylation of the 2-oxoglutarate dehydrogenase complex. In terms of processing, phosphorylated. In terms of tissue distribution, ubiquitously expressed. Highly expressed in small intestine, prostate and thyroid, while aorta and colon tissues exhibit weak expression levels.

The protein localises to the mitochondrion. The protein resides in the mitochondrion matrix. The enzyme catalyses 1-octadecanoyl-2-(5Z,8Z,11Z,14Z-eicosatetraenoyl)-sn-glycerol + H2O = 2-(5Z,8Z,11Z,14Z-eicosatetraenoyl)-glycerol + octadecanoate + H(+). The catalysed reaction is a 1,2-diacyl-sn-glycerol + H2O = a 2-acylglycerol + a fatty acid + H(+). It carries out the reaction a 1,3-diacyl-sn-glycerol + H2O = a 1-acyl-sn-glycerol + a fatty acid + H(+). It catalyses the reaction 1-octadecanoyl-2-(9Z-octadecenoyl)-sn-glycerol + H2O = 2-(9Z-octadecenoyl)-glycerol + octadecanoate + H(+). The enzyme catalyses 1-octadecanoyl-2-(4Z,7Z,10Z,13Z,16Z,19Z-docosahexaenoyl)-sn-glycerol + H2O = 2-(4Z,7Z,10Z,13Z,16Z,19Z-docosahexaenoyl)-glycerol + octadecanoate + H(+). The catalysed reaction is 1,2-didecanoylglycerol + H2O = decanoylglycerol + decanoate + H(+). Functionally, catalyzes the hydrolysis of diacylglycerol in vitro and may function as a key regulator in lipid metabolism, namely by regulating the intracellular levels of diacylglycerol. 1,2-diacyl-sn-glycerols are the preferred substrate over 1,3-diacyl-sn-glycerols. The enzyme hydrolyzes stearate in preference to palmitate from the sn-1 position of 1,2-diacyl-sn-glycerols. Maintains the functional lipoylation of the 2-oxoglutarate dehydrogenase complex (OGDHc) through its interaction with the OGDHc by preventing the formation of lipoyl adducts. In addition, is also required for the expansion and differentiation of embryonic stem cells (ESCs). The polypeptide is sn-1-specific diacylglycerol lipase ABHD11 (Homo sapiens (Human)).